A 429-amino-acid chain; its full sequence is tRNA(Ile2) 2-agmatinylcytidine synthetase TiaS (429 aa).

The tract at residues 403–429 is disordered; it reads KPPERPLHPSKSLEPPSTPIHSDTISL.

Belongs to the TiaS family.

It localises to the cytoplasm. It catalyses the reaction cytidine(34) in tRNA(Ile2) + agmatine + ATP + H2O = 2-agmatinylcytidine(34) in tRNA(Ile2) + AMP + 2 phosphate + 2 H(+). In terms of biological role, ATP-dependent agmatine transferase that catalyzes the formation of 2-agmatinylcytidine (agm2C) at the wobble position (C34) of tRNA(Ile2), converting the codon specificity from AUG to AUA. In Hyperthermus butylicus (strain DSM 5456 / JCM 9403 / PLM1-5), this protein is tRNA(Ile2) 2-agmatinylcytidine synthetase TiaS.